A 302-amino-acid polypeptide reads, in one-letter code: L-threonate dehydrogenase (302 aa).

Residues 7 to 35 (FHVG…TWGA) and Thr102 contribute to the NAD(+) site. The active site involves Lys178. Lys246 contributes to the NAD(+) binding site.

It belongs to the HIBADH-related family. L-threonate dehydrogenase subfamily.

It carries out the reaction L-threonate + NAD(+) = 2-dehydro-L-erythronate + NADH + H(+). Functionally, catalyzes oxidation of L-threonate to 2-oxo-tetronate. Can use either NAD(+) or NADP(+) as cosubstrate, with a preference for NAD(+). This Escherichia coli O6:H1 (strain CFT073 / ATCC 700928 / UPEC) protein is L-threonate dehydrogenase.